We begin with the raw amino-acid sequence, 88 residues long: Elongation factor 1-beta (88 aa).

The protein belongs to the EF-1-beta/EF-1-delta family.

In terms of biological role, promotes the exchange of GDP for GTP in EF-1-alpha/GDP, thus allowing the regeneration of EF-1-alpha/GTP that could then be used to form the ternary complex EF-1-alpha/GTP/AAtRNA. In Haloarcula marismortui (strain ATCC 43049 / DSM 3752 / JCM 8966 / VKM B-1809) (Halobacterium marismortui), this protein is Elongation factor 1-beta.